The primary structure comprises 136 residues: Protein scalloped (136 aa).

Its subcellular location is the nucleus. Its function is as follows. Probable transcription factor that function in the regulation of cell-specific gene expression during drosophila development, particularly in the differentiation of the nervous system. The sequence is that of Protein scalloped (SD) from Junonia coenia (Peacock butterfly).